Reading from the N-terminus, the 415-residue chain is MASLFERPSLVFGAAIVLRAILLVYGAWQDAHSAVKYTDIDYMVFTDAARYVSKGDSPYARDTYRYTPLLAWLLLPTSWDGFFSFGKVLFALSDVVAGWLIAKALTSFYGMSPPRALKYASVWLLNPMVANISTRGSSEGLLCVLVIALLWAVLNRKITLAGVLLGLSVHFKIYPFVYGPSIIWWLDEEREGLKSSSQKQKPEQDDRNLLTHIFNFITPSRLLLTTTALATFSGLNISMYILYDFPFAQHTYLHHLTRIDHRHNFSPYSSLLYLSAAGDIQGSFESLAFIPQLLLSVVVIPIVLAKRSLPGAMLAQTFAFVTFNKVCTSQYFLWYLIFLPFYLPSSSLMKNPRLGITVTALWVIAQALWLQQGYYLEFLGLSSFVPGLFLASLGFFAVNIWILGIIINDVALEGC.

The next 9 helical transmembrane spans lie at 8-28 (PSLV…YGAW), 82-102 (FFSF…WLIA), 134-154 (TRGS…WAVL), 158-178 (ITLA…PFVY), 222-242 (LLLT…MYIL), 284-304 (FESL…PIVL), 329-349 (SQYF…SSLM), 354-374 (LGIT…QQGY), and 387-407 (GLFL…GIII).

The protein belongs to the PIGM family.

It localises to the endoplasmic reticulum membrane. Its pathway is glycolipid biosynthesis; glycosylphosphatidylinositol-anchor biosynthesis. Its function is as follows. Mannosyltransferase involved in glycosylphosphatidylinositol-anchor biosynthesis. Transfers the first alpha-1,4-mannose to GlcN-acyl-PI during GPI precursor assembly. Required for cell wall integrity. In Aspergillus oryzae (strain ATCC 42149 / RIB 40) (Yellow koji mold), this protein is GPI mannosyltransferase 1 (gpi14).